We begin with the raw amino-acid sequence, 143 residues long: Aspartate 1-decarboxylase (143 aa).

Serine 25 functions as the Schiff-base intermediate with substrate; via pyruvic acid in the catalytic mechanism. Serine 25 carries the post-translational modification Pyruvic acid (Ser). Threonine 57 is a substrate binding site. Tyrosine 58 serves as the catalytic Proton donor. 73–75 (GAA) provides a ligand contact to substrate.

This sequence belongs to the PanD family. Heterooctamer of four alpha and four beta subunits. It depends on pyruvate as a cofactor. Is synthesized initially as an inactive proenzyme, which is activated by self-cleavage at a specific serine bond to produce a beta-subunit with a hydroxyl group at its C-terminus and an alpha-subunit with a pyruvoyl group at its N-terminus.

The protein localises to the cytoplasm. It catalyses the reaction L-aspartate + H(+) = beta-alanine + CO2. It functions in the pathway cofactor biosynthesis; (R)-pantothenate biosynthesis; beta-alanine from L-aspartate: step 1/1. Functionally, catalyzes the pyruvoyl-dependent decarboxylation of aspartate to produce beta-alanine. This chain is Aspartate 1-decarboxylase, found in Mycolicibacterium paratuberculosis (strain ATCC BAA-968 / K-10) (Mycobacterium paratuberculosis).